A 96-amino-acid chain; its full sequence is UPF0235 protein VCM66_0443 (96 aa).

It belongs to the UPF0235 family.

The sequence is that of UPF0235 protein VCM66_0443 from Vibrio cholerae serotype O1 (strain M66-2).